The following is a 216-amino-acid chain: LexA repressor (216 aa).

The segment at residues 28 to 48 (RAEIAAELGFSSANSAEEHLR) is a DNA-binding region (H-T-H motif). Catalysis depends on for autocatalytic cleavage activity residues Ser-134 and Lys-171.

This sequence belongs to the peptidase S24 family. As to quaternary structure, homodimer.

The catalysed reaction is Hydrolysis of Ala-|-Gly bond in repressor LexA.. In terms of biological role, represses a number of genes involved in the response to DNA damage (SOS response), including recA and lexA. In the presence of single-stranded DNA, RecA interacts with LexA causing an autocatalytic cleavage which disrupts the DNA-binding part of LexA, leading to derepression of the SOS regulon and eventually DNA repair. This is LexA repressor from Paraburkholderia xenovorans (strain LB400).